Reading from the N-terminus, the 468-residue chain is Nucleoprotein (468 aa).

The tract at residues 1 to 64 (MSGRNRSRSG…KPKAAPPQNV (64 aa)) is disordered. Basic and acidic residues predominate over residues 18-33 (FKQESDGSDSESERRN). Positions 48 to 193 (GSAPKPEKPK…AEGRGSRGNS (146 aa)) are RNA-binding. The region spanning 62–186 (QNVSWFAPLV…GIPKGFYAEG (125 aa)) is the CoV N NTD domain. Arg-106, Arg-120, and Arg-162 together coordinate RNA. Ser-165 is subject to Phosphoserine; by host. Disordered regions lie at residues 181 to 228 (GFYA…PSTE), 373 to 399 (KDFPPTEPKKDKKKKEETAQDTVIFED), and 419 to 468 (QTDD…AERS). A compositionally biased stretch (low complexity) spans 190 to 223 (RGNSRSSSRNSSRASSRGNSRASSRGASPGRPAA). The CoV N CTD domain occupies 259–376 (TKNEAAANAK…ENLNAYKDFP (118 aa)). The interval 270 to 373 (LRHKRTAHKG…ILAENLNAYK (104 aa)) is dimerization. The segment covering 379–390 (EPKKDKKKKEET) has biased composition (basic and acidic residues). Residues 419-436 (QTDDEWLGGDETVYEDED) show a composition bias toward acidic residues. Phosphothreonine; by host is present on Thr-451.

The protein belongs to the betacoronavirus nucleocapsid protein family. As to quaternary structure, homooligomer. Both monomeric and oligomeric forms interact with RNA. Interacts with protein M. Interacts with NSP3; this interaction serves to tether the genome to the newly translated replicase-transcriptase complex at a very early stage of infection. In terms of processing, ADP-ribosylated. The ADP-ribosylation is retained in the virion during infection. Phosphorylated on serine and threonine residues.

Its subcellular location is the virion. The protein localises to the host endoplasmic reticulum-Golgi intermediate compartment. It is found in the host Golgi apparatus. In terms of biological role, packages the positive strand viral genome RNA into a helical ribonucleocapsid (RNP) and plays a fundamental role during virion assembly through its interactions with the viral genome and membrane protein M. Plays an important role in enhancing the efficiency of subgenomic viral RNA transcription as well as viral replication. In Rousettus leschenaultii (Leschenault's rousette), this protein is Nucleoprotein.